Here is a 332-residue protein sequence, read N- to C-terminus: Procathepsin L (332 aa).

The first 17 residues, 1 to 17 (MHPLLFLAGLCLGVASA), serve as a signal peptide directing secretion. A propeptide spans 18 to 112 (APQLYQSLDA…KVFQAPFFVE (95 aa)) (activation peptide). Glu-121 lines the Zn(2+) pocket. Cys-137 is an active-site residue. Zn(2+)-binding residues include Glu-162, Asp-183, Glu-198, and Asp-208. A disulfide bridge connects residues Cys-168 and Cys-210. The N-linked (GlcNAc...) asparagine glycan is linked to Asn-220. Zn(2+)-binding residues include Asp-226, Asp-249, Asp-272, and Asp-274. Cysteines 268 and 321 form a disulfide. Residue His-275 is part of the active site. The propeptide occupies 288-290 (ETE). Asn-299 is a catalytic residue.

Belongs to the peptidase C1 family. Dimer of a heavy and a light chain linked by disulfide bonds. Interacts with Long isoform of CD74/Ii chain; the interaction stabilizes the conformation of mature CTSL. Post-translationally, during export along the endocytic pathway, pro-CTSL undergoes several proteolytic cleavages to generate the CTSL single-chain and two-chain mature forms, composed of a heavy chain linked to a light chain by disulfide bonds. Autocleavage; produces the single-chain CTSL after cleavage of the propeptide. The cleavage can be intermolecular. Expressed in the endometrium.

It is found in the lysosome. The protein localises to the apical cell membrane. The protein resides in the cytoplasmic vesicle. It localises to the secretory vesicle. Its subcellular location is the chromaffin granule. It is found in the secreted. The protein localises to the extracellular space. The enzyme catalyses Specificity close to that of papain. As compared to cathepsin B, cathepsin L exhibits higher activity toward protein substrates, but has little activity on Z-Arg-Arg-NHMec, and no peptidyl-dipeptidase activity.. With respect to regulation, inhibited by the propeptide produced by autocleavage. Long isoform of CD74/Ii chain stabilizes the conformation of mature CTSL by binding to its active site and serving as a chaperone to help maintain a pool of mature enzyme in endocytic compartments and extracellular space of APCs. IFNG enhances the conversion into the CTSL mature and active form. Inhibited by CST6. Inhibited by the glycopeptide antibiotic teicoplanin. Inhibited by amantadine. Functionally, thiol protease important for the overall degradation of proteins in lysosomes. Plays a critical for normal cellular functions such as general protein turnover, antigen processing and bone remodeling. Involved in the solubilization of cross-linked TG/thyroglobulin and in the subsequent release of thyroid hormone thyroxine (T4) by limited proteolysis of TG/thyroglobulin in the thyroid follicle lumen. In neuroendocrine chromaffin cells secretory vesicles, catalyzes the prohormone proenkephalin processing to the active enkephalin peptide neurotransmitter. In thymus, regulates CD4(+) T cell positive selection by generating the major histocompatibility complex class II (MHCII) bound peptide ligands presented by cortical thymic epithelial cells. Also mediates invariant chain processing in cortical thymic epithelial cells. Major elastin-degrading enzyme at neutral pH. Accumulates as a mature and active enzyme in the extracellular space of antigen presenting cells (APCs) to regulate degradation of the extracellular matrix in the course of inflammation. Secreted form generates endostatin from COL18A1. Critical for cardiac morphology and function. Plays an important role in hair follicle morphogenesis and cycling, as well as epidermal differentiation. Required for maximal stimulation of steroidogenesis by TIMP1. The chain is Procathepsin L (CTSL) from Felis catus (Cat).